The chain runs to 269 residues: 1-(5-phosphoribosyl)-5-[(5-phosphoribosylamino)methylideneamino] imidazole-4-carboxamide isomerase (269 aa).

Asp10 serves as the catalytic Proton acceptor. The active-site Proton donor is the Asp132.

This sequence belongs to the HisA/HisF family.

Its subcellular location is the cytoplasm. It catalyses the reaction 1-(5-phospho-beta-D-ribosyl)-5-[(5-phospho-beta-D-ribosylamino)methylideneamino]imidazole-4-carboxamide = 5-[(5-phospho-1-deoxy-D-ribulos-1-ylimino)methylamino]-1-(5-phospho-beta-D-ribosyl)imidazole-4-carboxamide. The protein operates within amino-acid biosynthesis; L-histidine biosynthesis; L-histidine from 5-phospho-alpha-D-ribose 1-diphosphate: step 4/9. This is 1-(5-phosphoribosyl)-5-[(5-phosphoribosylamino)methylideneamino] imidazole-4-carboxamide isomerase from Xylella fastidiosa (strain Temecula1 / ATCC 700964).